The following is a 118-amino-acid chain: MVRETRVRVARVYEDIDPDDGQRVLVDRIWPHGIRKDDQRVGIWCKDVAPSKELREWYHHQPERFDEFASRYQEELHDSAALAELRKLTGRSVVTPVTATRHVARSHAAVLAQLLNGR.

To E.coli YeaO.

This is an uncharacterized protein from Mycobacterium bovis (strain ATCC BAA-935 / AF2122/97).